The following is a 371-amino-acid chain: Dihydroorotate dehydrogenase (quinone) (371 aa).

Residues 79–83 (AGFDK) and T103 contribute to the FMN site. K83 is a substrate binding site. 128–132 (NRMGF) provides a ligand contact to substrate. FMN-binding residues include N156 and N189. Residue N189 participates in substrate binding. S192 functions as the Nucleophile in the catalytic mechanism. N194 lines the substrate pocket. Positions 225 and 253 each coordinate FMN. 254 to 255 (NT) is a binding site for substrate. Residues G279, G308, and 329–330 (YT) each bind FMN.

The protein belongs to the dihydroorotate dehydrogenase family. Type 2 subfamily. As to quaternary structure, monomer. FMN is required as a cofactor.

The protein resides in the cell membrane. It catalyses the reaction (S)-dihydroorotate + a quinone = orotate + a quinol. Its pathway is pyrimidine metabolism; UMP biosynthesis via de novo pathway; orotate from (S)-dihydroorotate (quinone route): step 1/1. Catalyzes the conversion of dihydroorotate to orotate with quinone as electron acceptor. This Corynebacterium glutamicum (strain ATCC 13032 / DSM 20300 / JCM 1318 / BCRC 11384 / CCUG 27702 / LMG 3730 / NBRC 12168 / NCIMB 10025 / NRRL B-2784 / 534) protein is Dihydroorotate dehydrogenase (quinone).